The following is a 250-amino-acid chain: 3-deoxy-manno-octulosonate cytidylyltransferase (250 aa).

This sequence belongs to the KdsB family.

The protein resides in the cytoplasm. It catalyses the reaction 3-deoxy-alpha-D-manno-oct-2-ulosonate + CTP = CMP-3-deoxy-beta-D-manno-octulosonate + diphosphate. It functions in the pathway nucleotide-sugar biosynthesis; CMP-3-deoxy-D-manno-octulosonate biosynthesis; CMP-3-deoxy-D-manno-octulosonate from 3-deoxy-D-manno-octulosonate and CTP: step 1/1. It participates in bacterial outer membrane biogenesis; lipopolysaccharide biosynthesis. Activates KDO (a required 8-carbon sugar) for incorporation into bacterial lipopolysaccharide in Gram-negative bacteria. This is 3-deoxy-manno-octulosonate cytidylyltransferase from Bacteroides thetaiotaomicron (strain ATCC 29148 / DSM 2079 / JCM 5827 / CCUG 10774 / NCTC 10582 / VPI-5482 / E50).